A 554-amino-acid chain; its full sequence is CTP synthase (554 aa).

Positions methionine 1–leucine 279 are amidoligase domain. Serine 21 provides a ligand contact to CTP. Position 21 (serine 21) interacts with UTP. ATP-binding positions include serine 22 to leucine 27 and aspartate 79. Residues aspartate 79 and glutamate 153 each coordinate Mg(2+). Residues aspartate 160 to glutamate 162, lysine 200 to glutamine 205, and lysine 236 each bind CTP. UTP contacts are provided by residues lysine 200–glutamine 205 and lysine 236. The 250-residue stretch at threonine 304–histidine 553 folds into the Glutamine amidotransferase type-1 domain. Glycine 367 contributes to the L-glutamine binding site. Cysteine 394 acts as the Nucleophile; for glutamine hydrolysis in catalysis. Residues leucine 395–glutamine 398, glutamate 417, and arginine 478 each bind L-glutamine. Catalysis depends on residues histidine 526 and glutamate 528.

This sequence belongs to the CTP synthase family. In terms of assembly, homotetramer.

The catalysed reaction is UTP + L-glutamine + ATP + H2O = CTP + L-glutamate + ADP + phosphate + 2 H(+). It carries out the reaction L-glutamine + H2O = L-glutamate + NH4(+). The enzyme catalyses UTP + NH4(+) + ATP = CTP + ADP + phosphate + 2 H(+). Its pathway is pyrimidine metabolism; CTP biosynthesis via de novo pathway; CTP from UDP: step 2/2. Its activity is regulated as follows. Allosterically activated by GTP, when glutamine is the substrate; GTP has no effect on the reaction when ammonia is the substrate. The allosteric effector GTP functions by stabilizing the protein conformation that binds the tetrahedral intermediate(s) formed during glutamine hydrolysis. Inhibited by the product CTP, via allosteric rather than competitive inhibition. Its function is as follows. Catalyzes the ATP-dependent amination of UTP to CTP with either L-glutamine or ammonia as the source of nitrogen. Regulates intracellular CTP levels through interactions with the four ribonucleotide triphosphates. The sequence is that of CTP synthase from Corynebacterium glutamicum (strain R).